Consider the following 689-residue polypeptide: Glycine--tRNA ligase beta subunit (689 aa).

This sequence belongs to the class-II aminoacyl-tRNA synthetase family. In terms of assembly, tetramer of two alpha and two beta subunits.

It localises to the cytoplasm. The catalysed reaction is tRNA(Gly) + glycine + ATP = glycyl-tRNA(Gly) + AMP + diphosphate. The protein is Glycine--tRNA ligase beta subunit of Escherichia coli O7:K1 (strain IAI39 / ExPEC).